Here is a 495-residue protein sequence, read N- to C-terminus: ATP-dependent RNA helicase dbp3 (495 aa).

Residues 1–14 (MAKRELQDKGSTEH) show a composition bias toward basic and acidic residues. The segment at 1-49 (MAKRELQDKGSTEHRAKKKSRNEKHTKKAEDSQASAQSSETQYTDPKEP) is disordered. Residues 15-27 (RAKKKSRNEKHTK) show a composition bias toward basic residues. Residues 97 to 105 (SFTSPTAIQ) carry the Q motif motif. The Helicase ATP-binding domain occupies 109–284 (WPFLFSGRDV…ATFMTSPVTV (176 aa)). Residue 122–129 (AETGSGKT) participates in ATP binding. Positions 231–234 (DEAD) match the DEAD box motif. Positions 315–464 (RLVQLLNKYQ…DVPEDLLKFG (150 aa)) constitute a Helicase C-terminal domain.

Belongs to the DEAD box helicase family. DDX5/DBP2 subfamily.

The protein resides in the nucleus. It localises to the nucleolus. The catalysed reaction is ATP + H2O = ADP + phosphate + H(+). Its function is as follows. ATP-dependent RNA helicase required for 60S ribosomal subunit synthesis. Involved in efficient pre-rRNA processing, predominantly at site A3, which is necessary for the normal formation of 25S and 5.8S rRNAs. This is ATP-dependent RNA helicase dbp3 (dbp3) from Aspergillus niger (strain ATCC MYA-4892 / CBS 513.88 / FGSC A1513).